We begin with the raw amino-acid sequence, 356 residues long: CX3C chemokine receptor 1 (356 aa).

At 1–26 (MTTLYSDWATESFEYDESSEACFIGD) the chain is on the extracellular side. A helical membrane pass occupies residues 27-47 (IVAFGTIFLSIFYSLVFAFGL). The Cytoplasmic portion of the chain corresponds to 48 to 68 (VGNLLVVCALTSSRKPKSITD). A helical membrane pass occupies residues 69–89 (IYLLNLALSDLLFVATLPFWT). Residues 90 to 105 (HYVISEQGFHNAVCKL) are Extracellular-facing. A disulfide bond links C103 and C176. Residues 106–126 (TTALFFIGFFGGIFFITVISI) traverse the membrane as a helical segment. Over 127-147 (DRYMAIVLAANSINNRTVQHG) the chain is Cytoplasmic. A helical transmembrane segment spans residues 148 to 168 (VTTSLGVWAAAILVAAPQFMF). Topologically, residues 169 to 195 (TKQKGNECLGDYPEVLQDIWPVLRNTE) are extracellular. The helical transmembrane segment at 196 to 216 (ANFLGFLLPVLIMSYCYFRII) threads the bilayer. Residues 217-232 (QTLFSCKNHKKAKAIK) are Cytoplasmic-facing. Residues 233-253 (LILLVVIVFFLFWTPYNVMIF) traverse the membrane as a helical segment. The Extracellular portion of the chain corresponds to 254–277 (LETLKLYGFFPNCDMKRDLRLALS). A helical membrane pass occupies residues 278–298 (VTETVAFSHCCLNPLIYAFAG). The Cytoplasmic segment spans residues 299–356 (QKFRRYLRHLSRKCQAVLCGRPVHVSFSPSESQRSRQESIVSSNFTHYTSDGDASLLL). T347 is modified (phosphothreonine).

It belongs to the G-protein coupled receptor 1 family. In terms of assembly, found in a ternary complex with CX3CL1 and ITGAV:ITGB3 or ITGA4:ITGB1. In terms of processing, this protein is not N-glycosylated which is unusual for G-protein-coupled receptors.

It localises to the cell membrane. In terms of biological role, receptor for the C-X3-C chemokine fractalkine (CX3CL1) present on many early leukocyte cells; CX3CR1-CX3CL1 signaling exerts distinct functions in different tissue compartments, such as immune response, inflammation, cell adhesion and chemotaxis. CX3CR1-CX3CL1 signaling mediates cell migratory functions. Responsible for the recruitment of natural killer (NK) cells to inflamed tissues. Acts as a regulator of inflammation process leading to atherogenesis by mediating macrophage and monocyte recruitment to inflamed atherosclerotic plaques, promoting cell survival. Involved in airway inflammation by promoting interleukin 2-producing T helper (Th2) cell survival in inflamed lung. Involved in the migration of circulating monocytes to non-inflamed tissues, where they differentiate into macrophages and dendritic cells. Acts as a negative regulator of angiogenesis, probably by promoting macrophage chemotaxis. Plays a key role in brain microglia by regulating inflammatory response in the central nervous system (CNS) and regulating synapse maturation. Required to restrain the microglial inflammatory response in the CNS and the resulting parenchymal damage in response to pathological stimuli. Involved in brain development by participating in synaptic pruning, a natural process during which brain microglia eliminates extra synapses during postnatal development. Synaptic pruning by microglia is required to promote the maturation of circuit connectivity during brain development. Acts as an important regulator of the gut microbiota by controlling immunity to intestinal bacteria and fungi. Expressed in lamina propria dendritic cells in the small intestine, which form transepithelial dendrites capable of taking up bacteria in order to provide defense against pathogenic bacteria. Required to initiate innate and adaptive immune responses against dissemination of commensal fungi (mycobiota) component of the gut: expressed in mononuclear phagocytes (MNPs) and acts by promoting induction of antifungal IgG antibodies response to confer protection against disseminated C.albicans or C.auris infection. Also acts as a receptor for C-C motif chemokine CCL26, inducing cell chemotaxis. This chain is CX3C chemokine receptor 1, found in Oryctolagus cuniculus (Rabbit).